The following is a 204-amino-acid chain: Calexcitin-1 (204 aa).

EF-hand domains lie at 25–61, 75–110, and 115–150; these read FLVK…VRDI, SLAA…TDAK, and WFKD…YGFD. Ca(2+) is bound by residues Asp39, Asn41, Ser43, Gln45, Asp50, Asp88, Asp90, Asp92, Glu99, Asp128, Ser130, Asp132, and Glu139.

This is Calexcitin-1 (cex-1) from Caenorhabditis elegans.